A 119-amino-acid polypeptide reads, in one-letter code: Large ribosomal subunit protein uL18 (119 aa).

This sequence belongs to the universal ribosomal protein uL18 family. Part of the 50S ribosomal subunit; part of the 5S rRNA/L5/L18/L25 subcomplex. Contacts the 5S and 23S rRNAs.

In terms of biological role, this is one of the proteins that bind and probably mediate the attachment of the 5S RNA into the large ribosomal subunit, where it forms part of the central protuberance. The polypeptide is Large ribosomal subunit protein uL18 (Oceanobacillus iheyensis (strain DSM 14371 / CIP 107618 / JCM 11309 / KCTC 3954 / HTE831)).